The primary structure comprises 212 residues: Ribonuclease P protein component 3 (212 aa).

It belongs to the eukaryotic/archaeal RNase P protein component 3 family. In terms of assembly, consists of a catalytic RNA component and at least 5 protein subunits. Forms a heterotetrameric subcomplex with Rnp2. Reconstituted enzyme missing individual protein subunits is suboptimally active, showing each subunit contributes to optimization of activity.

It is found in the cytoplasm. It carries out the reaction Endonucleolytic cleavage of RNA, removing 5'-extranucleotides from tRNA precursor.. Functionally, part of ribonuclease P, a protein complex that generates mature tRNA molecules by cleaving their 5'-ends. Not absolutely essential for activity in vitro, however it strongly stimulates activity. Binds RNase P RNA. The protein is Ribonuclease P protein component 3 of Pyrococcus horikoshii (strain ATCC 700860 / DSM 12428 / JCM 9974 / NBRC 100139 / OT-3).